Consider the following 176-residue polypeptide: ATP synthase subunit delta (176 aa).

This sequence belongs to the ATPase delta chain family. As to quaternary structure, F-type ATPases have 2 components, F(1) - the catalytic core - and F(0) - the membrane proton channel. F(1) has five subunits: alpha(3), beta(3), gamma(1), delta(1), epsilon(1). F(0) has three main subunits: a(1), b(2) and c(10-14). The alpha and beta chains form an alternating ring which encloses part of the gamma chain. F(1) is attached to F(0) by a central stalk formed by the gamma and epsilon chains, while a peripheral stalk is formed by the delta and b chains.

Its subcellular location is the cell inner membrane. Functionally, f(1)F(0) ATP synthase produces ATP from ADP in the presence of a proton or sodium gradient. F-type ATPases consist of two structural domains, F(1) containing the extramembraneous catalytic core and F(0) containing the membrane proton channel, linked together by a central stalk and a peripheral stalk. During catalysis, ATP synthesis in the catalytic domain of F(1) is coupled via a rotary mechanism of the central stalk subunits to proton translocation. Its function is as follows. This protein is part of the stalk that links CF(0) to CF(1). It either transmits conformational changes from CF(0) to CF(1) or is implicated in proton conduction. In Campylobacter curvus (strain 525.92), this protein is ATP synthase subunit delta.